Reading from the N-terminus, the 452-residue chain is PTS system N-acetylglucosamine-specific EIICB component (452 aa).

The region spanning 1-361 is the PTS EIIC type-1 domain; sequence MLSFLQKLGK…LNLKTPGRED (361 aa). 9 helical membrane passes run 8 to 28, 42 to 62, 91 to 111, 130 to 150, 163 to 183, 223 to 243, 257 to 277, 279 to 299, and 329 to 349; these read LGKS…ILAL, AGTA…AIGI, TNNM…YTYN, LVPI…GVVW, WMLG…RLLI, MTGF…AMVV, MIGF…EFAF, FLSP…LFIV, and LLLL…YVLI. A PTS EIIB type-1 domain is found at 375–452; the sequence is DVNENIMLKG…AAEELRAAVK (78 aa). The active-site Phosphocysteine intermediate; for EIIB activity is Cys397.

Interacts with FloT.

It is found in the cell membrane. The protein localises to the membrane raft. It carries out the reaction N(pros)-phospho-L-histidyl-[protein] + N-acetyl-D-glucosamine(out) = N-acetyl-D-glucosamine 6-phosphate(in) + L-histidyl-[protein]. Its function is as follows. The phosphoenolpyruvate-dependent sugar phosphotransferase system (sugar PTS), a major carbohydrate active -transport system, catalyzes the phosphorylation of incoming sugar substrates concomitantly with their translocation across the cell membrane. This system is involved in N-acetylglucosamine transport. The sequence is that of PTS system N-acetylglucosamine-specific EIICB component (nagP) from Bacillus subtilis (strain 168).